The following is a 1906-amino-acid chain: Alpha-2-macroglobulin homolog (1906 aa).

An N-terminal signal peptide occupies residues 1–21; sequence MIIRVCIRCFIVLTLVLGIGG. C22 carries the N-palmitoyl cysteine lipid modification. C22 carries S-diacylglycerol cysteine lipidation.

Belongs to the protease inhibitor I39 (alpha-2-macroglobulin) family. Bacterial alpha-2-macroglobulin subfamily.

It is found in the cell membrane. In Nostoc sp. (strain PCC 7120 / SAG 25.82 / UTEX 2576), this protein is Alpha-2-macroglobulin homolog.